The sequence spans 430 residues: Tol-Pal system protein TolB (430 aa).

The signal sequence occupies residues 1–21; sequence MKQALRVAVSFFMLWAAVLHA.

It belongs to the TolB family. In terms of assembly, the Tol-Pal system is composed of five core proteins: the inner membrane proteins TolA, TolQ and TolR, the periplasmic protein TolB and the outer membrane protein Pal. They form a network linking the inner and outer membranes and the peptidoglycan layer.

It is found in the periplasm. Its function is as follows. Part of the Tol-Pal system, which plays a role in outer membrane invagination during cell division and is important for maintaining outer membrane integrity. TolB occupies a key intermediary position in the Tol-Pal system because it communicates directly with both membrane-embedded components, Pal in the outer membrane and TolA in the inner membrane. This Enterobacter sp. (strain 638) protein is Tol-Pal system protein TolB.